A 159-amino-acid polypeptide reads, in one-letter code: Ribosomal RNA large subunit methyltransferase H (159 aa).

Residues leucine 76, glycine 108, and 127–132 (FSNMTF) contribute to the S-adenosyl-L-methionine site.

Belongs to the RNA methyltransferase RlmH family. In terms of assembly, homodimer.

The protein resides in the cytoplasm. It catalyses the reaction pseudouridine(1915) in 23S rRNA + S-adenosyl-L-methionine = N(3)-methylpseudouridine(1915) in 23S rRNA + S-adenosyl-L-homocysteine + H(+). In terms of biological role, specifically methylates the pseudouridine at position 1915 (m3Psi1915) in 23S rRNA. In Staphylococcus epidermidis (strain ATCC 35984 / DSM 28319 / BCRC 17069 / CCUG 31568 / BM 3577 / RP62A), this protein is Ribosomal RNA large subunit methyltransferase H.